The primary structure comprises 87 residues: Small ribosomal subunit protein bS20 (87 aa).

A disordered region spans residues 1–26 (MANIKSAQKRAVQSEKRRQHNASQRS).

It belongs to the bacterial ribosomal protein bS20 family.

Binds directly to 16S ribosomal RNA. This Glaesserella parasuis serovar 5 (strain SH0165) (Haemophilus parasuis) protein is Small ribosomal subunit protein bS20.